The primary structure comprises 65 residues: Large ribosomal subunit protein bL35 (65 aa).

Residues 20-42 (GKVRRHHANASHIMTTKTTKRKR) are disordered.

Belongs to the bacterial ribosomal protein bL35 family.

The protein is Large ribosomal subunit protein bL35 of Syntrophus aciditrophicus (strain SB).